A 293-amino-acid polypeptide reads, in one-letter code: uncharacterized protein (293 aa).

The segment covering 1–10 (MHMQLRKRKR) has biased composition (basic residues). The disordered stretch occupies residues 1–28 (MHMQLRKRKRVDYSGRNQTSDPPSTTTA). Positions 15-28 (GRNQTSDPPSTTTA) are enriched in polar residues.

It localises to the nucleus. This is an uncharacterized protein from Saccharomyces cerevisiae (strain ATCC 204508 / S288c) (Baker's yeast).